A 412-amino-acid chain; its full sequence is Lysosomal phospholipase A and acyltransferase (412 aa).

The signal sequence occupies residues 1–33 (MGLHLRPYRVGLLPDGLLFLLLLLMLLADPALP). Aspartate 46 provides a ligand contact to substrate. Cysteine 65 and cysteine 89 are joined by a disulfide. Asparagine 99 is a glycosylation site (N-linked (GlcNAc...) asparagine). Serine 198 functions as the Acyl-ester intermediate in the catalytic mechanism. Serine 198 contributes to the Zn(2+) binding site. Residue methionine 199 coordinates substrate. N-linked (GlcNAc...) asparagine glycosylation is found at asparagine 273 and asparagine 289. Residues aspartate 340 and cysteine 355 each coordinate Zn(2+). Active-site charge relay system residues include aspartate 360 and histidine 392. Histidine 392 serves as a coordination point for Zn(2+). The N-linked (GlcNAc...) asparagine glycan is linked to asparagine 398.

It belongs to the AB hydrolase superfamily. Lipase family. N-glycosylated. N-glycosylation is important for maturation of the enzyme and normal subcellular location. Detected in blood plasma (at protein level). Ubiquitous. Highly expressed in heart, placenta, skeletal muscle, kidney and pancreas. Detected at lower levels in spleen, thymus, prostate, testis, ovary, small intestine, colon and peripheral blood leukocytes.

It localises to the lysosome. Its subcellular location is the secreted. It is found in the membrane. It catalyses the reaction a 1,2-diacyl-sn-glycero-3-phosphocholine + H2O = a 2-acyl-sn-glycero-3-phosphocholine + a fatty acid + H(+). The enzyme catalyses 1-hexadecanoyl-2-(9Z-octadecenoyl)-sn-glycero-3-phosphocholine + H2O = 2-(9Z-octadecenoyl)-sn-glycero-3-phosphocholine + hexadecanoate + H(+). It carries out the reaction 1-hexadecanoyl-2-glutaroyl-sn-glycero-3-phosphocholine + H2O = 2-glutaroyl-sn-glycero-3-phosphocholine + hexadecanoate + H(+). The catalysed reaction is 1-hexadecanoyl-2-nonadioyl-sn-glycero-3-phosphocholine + H2O = 2-nonadioyl-sn-glycero-3-phosphocholine + hexadecanoate + H(+). It catalyses the reaction 1-hexadecanoyl-2-(5-oxopentanoyl)-sn-glycero-3-phosphocholine + H2O = 2-(5-oxopentanoyl)-sn-glycero-3-phosphocholine + hexadecanoate + H(+). The enzyme catalyses 1-hexadecanoyl-2-(9-oxononanoyl)-sn-glycero-3-phosphocholine + H2O = 2-(9-oxononanoyl)-sn-glycero-3-phosphocholine + hexadecanoate + H(+). It carries out the reaction 1,2-dihexadecanoyl-sn-glycero-3-phosphocholine + H2O = 2-hexadecanoyl-sn-glycero-3-phosphocholine + hexadecanoate + H(+). The catalysed reaction is a 1,2-diacyl-sn-glycero-3-phosphocholine + H2O = a 1-acyl-sn-glycero-3-phosphocholine + a fatty acid + H(+). It catalyses the reaction 1,2-di-(9Z-octadecenoyl)-sn-glycero-3-phosphocholine + H2O = 1-(9Z-octadecenoyl)-sn-glycero-3-phosphocholine + (9Z)-octadecenoate + H(+). The enzyme catalyses 1-hexadecanoyl-2-(9Z-octadecenoyl)-sn-glycero-3-phosphocholine + H2O = 1-hexadecanoyl-sn-glycero-3-phosphocholine + (9Z)-octadecenoate + H(+). It carries out the reaction 1,2-dihexadecanoyl-sn-glycero-3-phosphocholine + H2O = 1-hexadecanoyl-sn-glycero-3-phosphocholine + hexadecanoate + H(+). The catalysed reaction is a 1-acyl-sn-glycero-3-phosphocholine + H2O = sn-glycerol 3-phosphocholine + a fatty acid + H(+). It catalyses the reaction 1-hexadecanoyl-sn-glycero-3-phosphocholine + H2O = sn-glycerol 3-phosphocholine + hexadecanoate + H(+). The enzyme catalyses N-(acetyl)-sphing-4-enine + a 1,2-diacyl-sn-glycero-3-phosphoethanolamine = 1-O-acyl-N-(acetyl)-sphing-4-enine + a 2-acyl-sn-glycero-3-phosphoethanolamine. It carries out the reaction 1-hexadecanoyl-2-(9Z-octadecenoyl)-sn-glycero-3-phosphoethanolamine + N-(acetyl)-sphing-4-enine = 2-(9Z-octadecenoyl)-sn-glycero-3-phosphoethanolamine + 1-hexadecanoyl-N-(acetyl)-sphing-4-enine. The catalysed reaction is 1-hexadecanoyl-2-(9Z,12Z-octadecadienoyl)-sn-glycero-3-phosphoethanolamine + N-(acetyl)-sphing-4-enine = 2-(9Z,12Z)-octadecadienoyl-sn-glycero-3-phosphoethanolamine + 1-hexadecanoyl-N-(acetyl)-sphing-4-enine. It catalyses the reaction 1-hexadecanoyl-2-(5Z,8Z,11Z,14Z-eicosatetraenoyl)-sn-glycero-3-phosphoethanolamine + N-(acetyl)-sphing-4-enine = 2-(5Z,8Z,11Z,14Z)-eicosatetraenoyl-sn-glycero-3-phosphoethanolamine + 1-hexadecanoyl-N-(acetyl)-sphing-4-enine. The enzyme catalyses N-(acetyl)-sphing-4-enine + a 1,2-diacyl-sn-glycero-3-phosphoethanolamine = 1-O-acyl-N-(acetyl)-sphing-4-enine + a 1-acyl-sn-glycero-3-phosphoethanolamine. It carries out the reaction 1-hexadecanoyl-2-(9Z-octadecenoyl)-sn-glycero-3-phosphoethanolamine + N-(acetyl)-sphing-4-enine = 1-(9Z-octadecenoyl)-N-(acetyl)-sphing-4-enine + 1-hexadecanoyl-sn-glycero-3-phosphoethanolamine. The catalysed reaction is 1-hexadecanoyl-2-(9Z,12Z-octadecadienoyl)-sn-glycero-3-phosphoethanolamine + N-(acetyl)-sphing-4-enine = 1-(9Z,12Z-octadecadienoyl)-N-acetylsphing-4-enine + 1-hexadecanoyl-sn-glycero-3-phosphoethanolamine. It catalyses the reaction 1-hexadecanoyl-2-(5Z,8Z,11Z,14Z-eicosatetraenoyl)-sn-glycero-3-phosphoethanolamine + N-(acetyl)-sphing-4-enine = 1-(5Z,8Z,11Z,14Z)-eicosatetraenoyl-N-(acetyl)-sphing-4-enine + 1-hexadecanoyl-sn-glycero-3-phosphoethanolamine. The enzyme catalyses N-(acetyl)-sphing-4-enine + a 1,2-diacyl-sn-glycero-3-phosphocholine = 1-O-acyl-N-(acetyl)-sphing-4-enine + a 1-acyl-sn-glycero-3-phosphocholine. It carries out the reaction 1-hexadecanoyl-2-(9Z-octadecenoyl)-sn-glycero-3-phosphocholine + N-(acetyl)-sphing-4-enine = 1-(9Z-octadecenoyl)-N-(acetyl)-sphing-4-enine + 1-hexadecanoyl-sn-glycero-3-phosphocholine. The catalysed reaction is 1-hexadecanoyl-2-(9Z,12Z-octadecadienoyl)-sn-glycero-3-phosphocholine + N-(acetyl)-sphing-4-enine = 1-(9Z,12Z-octadecadienoyl)-N-acetylsphing-4-enine + 1-hexadecanoyl-sn-glycero-3-phosphocholine. It catalyses the reaction 1-hexadecanoyl-2-(5Z,8Z,11Z,14Z-eicosatetraenoyl)-sn-glycero-3-phosphocholine + N-(acetyl)-sphing-4-enine = 1-(5Z,8Z,11Z,14Z)-eicosatetraenoyl-N-(acetyl)-sphing-4-enine + 1-hexadecanoyl-sn-glycero-3-phosphocholine. The enzyme catalyses 1-hexadecanoyl-2-(4Z,7Z,10Z,13Z,16Z,19Z-docosahexaenoyl)-sn-glycero-3-phosphocholine + N-(acetyl)-sphing-4-enine = 1-(4Z,7Z,10Z,13Z,16Z,19Z-docosahexaenoyl)-N-(acetyl)-sphing-4-enine + 1-hexadecanoyl-sn-glycero-3-phosphocholine. It carries out the reaction 1-octadecanoyl-2-(9Z-octadecenoyl)-sn-glycero-3-phosphocholine + N-(acetyl)-sphing-4-enine = 1-(9Z-octadecenoyl)-N-(acetyl)-sphing-4-enine + 1-octadecanoyl-sn-glycero-3-phosphocholine. The catalysed reaction is 1-octadecanoyl-2-(9Z,12Z)-octadecadienoyl-sn-glycero-3-phosphocholine + N-(acetyl)-sphing-4-enine = 1-(9Z,12Z-octadecadienoyl)-N-acetylsphing-4-enine + 1-octadecanoyl-sn-glycero-3-phosphocholine. It catalyses the reaction 1-octadecanoyl-2-(5Z,8Z,11Z,14Z-eicosatetraenoyl)-sn-glycero-3-phosphocholine + N-(acetyl)-sphing-4-enine = 1-(5Z,8Z,11Z,14Z)-eicosatetraenoyl-N-(acetyl)-sphing-4-enine + 1-octadecanoyl-sn-glycero-3-phosphocholine. The enzyme catalyses 1-(9Z-octadecenoyl)-2-hexadecanoyl-sn-glycero-3-phosphocholine + N-(acetyl)-sphing-4-enine = 1-hexadecanoyl-N-(acetyl)-sphing-4-enine + 1-(9Z-octadecenoyl)-sn-glycero-3-phosphocholine. It carries out the reaction 1-(9Z)-octadecenoyl-2-octadecanoyl-sn-glycero-3-phosphocholine + N-(acetyl)-sphing-4-enine = 1-octadecanoyl-N-(acetyl)-sphing-4-enine + 1-(9Z-octadecenoyl)-sn-glycero-3-phosphocholine. The catalysed reaction is 1,2-di-(9Z-octadecenoyl)-sn-glycero-3-phosphocholine + N-(acetyl)-sphing-4-enine = 1-(9Z-octadecenoyl)-N-(acetyl)-sphing-4-enine + 1-(9Z-octadecenoyl)-sn-glycero-3-phosphocholine. It catalyses the reaction N-(acetyl)-sphing-4-enine + a 1,2-diacyl-sn-glycero-3-phosphocholine = 1-O-acyl-N-(acetyl)-sphing-4-enine + a 2-acyl-sn-glycero-3-phosphocholine. The enzyme catalyses 1-hexadecanoyl-2-(9Z-octadecenoyl)-sn-glycero-3-phosphocholine + N-(acetyl)-sphing-4-enine = 1-hexadecanoyl-N-(acetyl)-sphing-4-enine + 2-(9Z-octadecenoyl)-sn-glycero-3-phosphocholine. It carries out the reaction 1-hexadecanoyl-2-(9Z,12Z-octadecadienoyl)-sn-glycero-3-phosphocholine + N-(acetyl)-sphing-4-enine = 2-(9Z,12Z-octadecadienoyl)-sn-glycero-3-phosphocholine + 1-hexadecanoyl-N-(acetyl)-sphing-4-enine. The catalysed reaction is 1-hexadecanoyl-2-(5Z,8Z,11Z,14Z-eicosatetraenoyl)-sn-glycero-3-phosphocholine + N-(acetyl)-sphing-4-enine = 1-hexadecanoyl-N-(acetyl)-sphing-4-enine + 2-(5Z,8Z,11Z,14Z)-eicosatetraenoyl-sn-glycero-3-phosphocholine. It catalyses the reaction 1-hexadecanoyl-2-(4Z,7Z,10Z,13Z,16Z,19Z-docosahexaenoyl)-sn-glycero-3-phosphocholine + N-(acetyl)-sphing-4-enine = 2-(4Z,7Z,10Z,13Z,16Z,19Z-docosahexaenoyl)-sn-glycero-3-phosphocholine + 1-hexadecanoyl-N-(acetyl)-sphing-4-enine. The enzyme catalyses 1-hexadecanoyl-2-nonadioyl-sn-glycero-3-phosphocholine + N-(acetyl)-sphing-4-enine = 2-nonadioyl-sn-glycero-3-phosphocholine + 1-hexadecanoyl-N-(acetyl)-sphing-4-enine. It carries out the reaction 1-octadecanoyl-2-(9Z-octadecenoyl)-sn-glycero-3-phosphocholine + N-(acetyl)-sphing-4-enine = 1-octadecanoyl-N-(acetyl)-sphing-4-enine + 2-(9Z-octadecenoyl)-sn-glycero-3-phosphocholine. The catalysed reaction is 1-octadecanoyl-2-(5Z,8Z,11Z,14Z-eicosatetraenoyl)-sn-glycero-3-phosphocholine + N-(acetyl)-sphing-4-enine = 1-octadecanoyl-N-(acetyl)-sphing-4-enine + 2-(5Z,8Z,11Z,14Z)-eicosatetraenoyl-sn-glycero-3-phosphocholine. It catalyses the reaction 1-(9Z-octadecenoyl)-2-hexadecanoyl-sn-glycero-3-phosphocholine + N-(acetyl)-sphing-4-enine = 1-(9Z-octadecenoyl)-N-(acetyl)-sphing-4-enine + 2-hexadecanoyl-sn-glycero-3-phosphocholine. The enzyme catalyses 1-(9Z)-octadecenoyl-2-octadecanoyl-sn-glycero-3-phosphocholine + N-(acetyl)-sphing-4-enine = 2-octadecanoyl-sn-glycero-3-phosphocholine + 1-(9Z-octadecenoyl)-N-(acetyl)-sphing-4-enine. It carries out the reaction a 1,2-diacyl-sn-glycero-3-phospho-L-serine + N-(acetyl)-sphing-4-enine = a 2-acyl-sn-glycero-3-phospho-L-serine + 1-O-acyl-N-(acetyl)-sphing-4-enine. The catalysed reaction is 1-octadecanoyl-2-(9Z-octadecenoyl)-sn-glycero-3-phospho-L-serine + N-(acetyl)-sphing-4-enine = 2-(9Z-octadecenoyl)-sn-glycero-3-phospho-L-serine + 1-octadecanoyl-N-(acetyl)-sphing-4-enine. It catalyses the reaction a 1,2-diacyl-sn-glycero-3-phospho-L-serine + N-(acetyl)-sphing-4-enine = 1-O-acyl-N-(acetyl)-sphing-4-enine + a 1-acyl-sn-glycero-3-phospho-L-serine. The enzyme catalyses 1-octadecanoyl-2-(9Z-octadecenoyl)-sn-glycero-3-phospho-L-serine + N-(acetyl)-sphing-4-enine = 1-octadecanoyl-sn-glycero-3-phosphoserine + 1-(9Z-octadecenoyl)-N-(acetyl)-sphing-4-enine. It carries out the reaction a 1,2-diacyl-sn-glycero-3-phospho-(1'-sn-glycerol) + N-(acetyl)-sphing-4-enine = 2-acyl-sn-glycero-3-phospho-(1'-sn-glycerol) + 1-O-acyl-N-(acetyl)-sphing-4-enine. The catalysed reaction is 1-octadecanoyl-2-(9Z-octadecenoyl)-sn-glycero-3-phospho-(1'-sn-glycerol) + N-(acetyl)-sphing-4-enine = 2-(9Z-octadecenoyl)-sn-glycero-3-phospho-(1'-sn-glycerol) + 1-octadecanoyl-N-(acetyl)-sphing-4-enine. It catalyses the reaction a 1,2-diacyl-sn-glycero-3-phospho-(1'-sn-glycerol) + N-(acetyl)-sphing-4-enine = 1-O-acyl-N-(acetyl)-sphing-4-enine + 1-acyl-sn-glycero-3-phospho-(1'-sn-glycerol). The enzyme catalyses 1-octadecanoyl-2-(9Z-octadecenoyl)-sn-glycero-3-phospho-(1'-sn-glycerol) + N-(acetyl)-sphing-4-enine = 1-octadecanoyl-sn-glycero-3-phospho-(1'-sn-glycerol) + 1-(9Z-octadecenoyl)-N-(acetyl)-sphing-4-enine. It carries out the reaction an N-acylethanolamine + a 1,2-diacyl-sn-glycero-3-phosphocholine = 2-(acylamino)ethyl fatty acid + a 2-acyl-sn-glycero-3-phosphocholine. The catalysed reaction is an N-acylethanolamine + a 1,2-diacyl-sn-glycero-3-phosphocholine = 2-(acylamino)ethyl fatty acid + a 1-acyl-sn-glycero-3-phosphocholine. It catalyses the reaction N-(5Z,8Z,11Z,14Z-eicosatetraenoyl)-ethanolamine + 1,2-di-(9Z-octadecenoyl)-sn-glycero-3-phosphocholine = 2-[(5Z,8Z,11Z,14Z)-eicosatetraenoylamino]ethyl (9Z)-octadecenoate + (9Z-octadecenoyl)-sn-glycero-3-phosphocholine. The enzyme catalyses N-(9Z-octadecenoyl) ethanolamine + 1,2-di-(9Z-octadecenoyl)-sn-glycero-3-phosphocholine = 2-[(9Z)-octadecenoylamino]ethyl (9Z)-octadecenoate + (9Z-octadecenoyl)-sn-glycero-3-phosphocholine. It carries out the reaction a 3-acyl-sn-glycerol + a 1,2-diacyl-sn-glycero-3-phosphocholine = a 1,3-diacylglycerol + a 1-acyl-sn-glycero-3-phosphocholine. The catalysed reaction is a 3-acyl-sn-glycerol + a 1,2-diacyl-sn-glycero-3-phosphocholine = a 1,3-diacylglycerol + a 2-acyl-sn-glycero-3-phosphocholine. It catalyses the reaction 3-(9Z-octadecenoyl)-sn-glycerol + 1,2-di-(9Z-octadecenoyl)-sn-glycero-3-phosphocholine = 1,3-di-(9Z-octadecenoyl)-glycerol + (9Z-octadecenoyl)-sn-glycero-3-phosphocholine. The enzyme catalyses 3-hexadecanoyl-sn-glycerol + 1,2-di-(9Z-octadecenoyl)-sn-glycero-3-phosphocholine = 1-(9Z)-octadecenoyl-3-hexadecanoyl-sn-glycerol + (9Z-octadecenoyl)-sn-glycero-3-phosphocholine. It carries out the reaction a 1-acyl-sn-glycerol + a 1,2-diacyl-sn-glycero-3-phosphocholine = a 1,3-diacylglycerol + a 2-acyl-sn-glycero-3-phosphocholine. The catalysed reaction is a 1-acyl-sn-glycerol + a 1,2-diacyl-sn-glycero-3-phosphocholine = a 1,3-diacylglycerol + a 1-acyl-sn-glycero-3-phosphocholine. It catalyses the reaction 1-(9Z-octadecenoyl)-sn-glycerol + 1,2-di-(9Z-octadecenoyl)-sn-glycero-3-phosphocholine = 1,3-di-(9Z-octadecenoyl)-glycerol + (9Z-octadecenoyl)-sn-glycero-3-phosphocholine. The enzyme catalyses 1-hexadecanoyl-sn-glycerol + 1,2-di-(9Z-octadecenoyl)-sn-glycero-3-phosphocholine = 1-hexadecanoyl-3-(9Z)-octadecenoyl-sn-glycerol + (9Z-octadecenoyl)-sn-glycero-3-phosphocholine. It carries out the reaction a 2-acylglycerol + a 1,2-diacyl-sn-glycero-3-phosphocholine = a 1,2-diacylglycerol + a 2-acyl-sn-glycero-3-phosphocholine. The catalysed reaction is a 2-acylglycerol + a 1,2-diacyl-sn-glycero-3-phosphocholine = a 1,2-diacylglycerol + a 1-acyl-sn-glycero-3-phosphocholine. It catalyses the reaction 2-hexadecanoylglycerol + 1,2-di-(9Z-octadecenoyl)-sn-glycero-3-phosphocholine = 1-(9Z)-octadecenoyl-2-hexadecanoylglycerol + (9Z-octadecenoyl)-sn-glycero-3-phosphocholine. The enzyme catalyses 1-O-alkylglycerol + a 1,2-diacyl-sn-glycero-3-phosphocholine = 1-O-alkyl-3-acylglycerol + a 1-acyl-sn-glycero-3-phosphocholine. It carries out the reaction 1-O-alkylglycerol + a 1,2-diacyl-sn-glycero-3-phosphocholine = 1-O-alkyl-3-acylglycerol + a 2-acyl-sn-glycero-3-phosphocholine. The catalysed reaction is 1-O-hexadecylglycerol + 1,2-di-(9Z-octadecenoyl)-sn-glycero-3-phosphocholine = 1-O-hexadecyl-3-(9Z)-octadecenoylglycerol + (9Z-octadecenoyl)-sn-glycero-3-phosphocholine. It catalyses the reaction 1-O-alkyl-2-acyl-sn-glycerol + a 1,2-diacyl-sn-glycero-3-phosphocholine = 1-O-alkyl-2,3-diacyl-sn-glycerol + a 2-acyl-sn-glycero-3-phosphocholine. The enzyme catalyses 1-O-alkyl-2-acyl-sn-glycerol + a 1,2-diacyl-sn-glycero-3-phosphocholine = 1-O-alkyl-2,3-diacyl-sn-glycerol + a 1-acyl-sn-glycero-3-phosphocholine. It carries out the reaction 1-O-hexadecyl-2-acetyl-sn-glycerol + 1,2-di-(9Z-octadecenoyl)-sn-glycero-3-phosphocholine = 1-O-hexadecyl-2-acetyl-3-(9Z)-octadecenoyl-sn-glycerol + (9Z-octadecenoyl)-sn-glycero-3-phosphocholine. The catalysed reaction is 1-O-hexadecyl-2-O-methyl-sn-glycerol + 1,2-di-(9Z-octadecenoyl)-sn-glycero-3-phosphocholine = 1-O-hexadecyl-2-O-methyl-3-(9Z)-octadecenoyl-sn-glycerol + (9Z-octadecenoyl)-sn-glycero-3-phosphocholine. It catalyses the reaction a 1,2-diacyl-sn-glycero-3-phosphoethanolamine + H2O = a 1-acyl-sn-glycero-3-phosphoethanolamine + a fatty acid + H(+). The enzyme catalyses 1-acyl-2-(5Z,8Z,11Z,14Z)-eicosatetraenoyl-sn-glycero-3-phosphoethanolamine + H2O = a 1-acyl-sn-glycero-3-phosphoethanolamine + (5Z,8Z,11Z,14Z)-eicosatetraenoate + H(+). It carries out the reaction a 1,2-diacyl-sn-glycero-3-phospho-(1'-sn-glycerol) + H2O = 1-acyl-sn-glycero-3-phospho-(1'-sn-glycerol) + a fatty acid + H(+). The catalysed reaction is 1-hexadecanoyl-2-(9Z-octadecenoyl)-sn-glycero-3-phospho-(1'-sn-glycerol) + H2O = 1-hexadecanoyl-sn-glycero-3-phospho-(1'-sn-glycerol) + (9Z)-octadecenoate + H(+). It catalyses the reaction a 1,2-diacyl-sn-glycero-3-phospho-(1'-sn-glycerol) + H2O = 2-acyl-sn-glycero-3-phospho-(1'-sn-glycerol) + a fatty acid + H(+). The enzyme catalyses 1-hexadecanoyl-2-(9Z-octadecenoyl)-sn-glycero-3-phospho-(1'-sn-glycerol) + H2O = 2-(9Z-octadecenoyl)-sn-glycero-3-phospho-(1'-sn-glycerol) + hexadecanoate + H(+). With respect to regulation, inhibited by zinc ions at neutral pH. Zinc ions in plasma may keep the enzyme from hydrolyzing inappropriate substrates. Has dual calcium-independent phospholipase and O-acyltransferase activities with a potential role in glycerophospholipid homeostasis and remodeling of acyl groups of lipophilic alcohols present in acidic cellular compartments. Catalyzes hydrolysis of the ester bond of the fatty acyl group attached at sn-1 or sn-2 position of phospholipids (phospholipase A1 or A2 activity) and transfer it to the hydroxyl group at the first carbon of lipophilic alcohols (O-acyltransferase activity). Among preferred fatty acyl donors are phosphatidylcholines, phosphatidylethanolamines, phosphatidylglycerols and phosphatidylserines. Favors sn-2 over sn-1 deacylation of unsaturated fatty acyl groups of phosphatidylcholines, phosphatidylethanolamines, and phosphatidylglycerols. Among preferred fatty acyl acceptors are natural lipophilic alcohols including short-chain ceramide N-acetyl-sphingosine (C2 ceramide), alkylacylglycerols, monoacylglycerols, and acylethanolamides such as anandamide and oleoylethanolamide. Selectively hydrolyzes the sn-1 fatty acyl group of truncated oxidized phospholipids and may play a role in detoxification of reactive oxidized phospholipids during oxidative stress. Required for normal phospholipid degradation in alveolar macrophages with potential implications in the clearance of pulmonary surfactant, which is mainly composed of dipalmitoylphosphatidylcholine (1,2-dihexadecanoyl-sn-glycero-3-phosphocholine). Involved in the first step of bis(monoacylglycero)phosphate (BMP) de novo synthesis from phosphatidylglycerol (1,2-diacyl-sn-glycero-3-phospho-(1'-sn-glycerol), PG). BMP is an important player in cargo sorting and degradation, regulation of cellular cholesterol levels and intercellular communication. At neutral pH, hydrolyzes the sn-1 fatty acyl group of the lysophosphatidylcholines. In Homo sapiens (Human), this protein is Lysosomal phospholipase A and acyltransferase.